The primary structure comprises 495 residues: Bifunctional protein GlmU (495 aa).

The segment at 1–241 is pyrophosphorylase; sequence MTFPGDTAVL…SALVAGVNNR (241 aa). Residues 12-15, Lys26, Gln83, 88-89, 112-114, Gly151, Glu166, Asn181, and Asn239 each bind UDP-N-acetyl-alpha-D-glucosamine; these read LAAG, GT, and SGD. Asp114 is a Mg(2+) binding site. Position 239 (Asn239) interacts with Mg(2+). Positions 242-262 are linker; sequence VQLAQLASELNRRVVAAHQLA. The segment at 263-495 is N-acetyltransferase; the sequence is GVTVVDPATT…TQPPDADQTP (233 aa). Positions 344 and 362 each coordinate UDP-N-acetyl-alpha-D-glucosamine. The active-site Proton acceptor is the His374. Residues Tyr377 and Asn388 each coordinate UDP-N-acetyl-alpha-D-glucosamine. Acetyl-CoA-binding positions include Ala391, 397–398, Ser416, and Ala434; that span reads NY. Residues 457 to 495 are disordered; that stretch reads IENWVQRKRPGSPAAQASKRASEMACQQPTQPPDADQTP. Over residues 483 to 495 the composition is skewed to low complexity; that stretch reads QQPTQPPDADQTP.

In the N-terminal section; belongs to the N-acetylglucosamine-1-phosphate uridyltransferase family. It in the C-terminal section; belongs to the transferase hexapeptide repeat family. As to quaternary structure, homotrimer. It depends on Mg(2+) as a cofactor.

It localises to the cytoplasm. It carries out the reaction alpha-D-glucosamine 1-phosphate + acetyl-CoA = N-acetyl-alpha-D-glucosamine 1-phosphate + CoA + H(+). It catalyses the reaction N-acetyl-alpha-D-glucosamine 1-phosphate + UTP + H(+) = UDP-N-acetyl-alpha-D-glucosamine + diphosphate. It participates in nucleotide-sugar biosynthesis; UDP-N-acetyl-alpha-D-glucosamine biosynthesis; N-acetyl-alpha-D-glucosamine 1-phosphate from alpha-D-glucosamine 6-phosphate (route II): step 2/2. It functions in the pathway nucleotide-sugar biosynthesis; UDP-N-acetyl-alpha-D-glucosamine biosynthesis; UDP-N-acetyl-alpha-D-glucosamine from N-acetyl-alpha-D-glucosamine 1-phosphate: step 1/1. Its pathway is bacterial outer membrane biogenesis; LPS lipid A biosynthesis. Functionally, catalyzes the last two sequential reactions in the de novo biosynthetic pathway for UDP-N-acetylglucosamine (UDP-GlcNAc). The C-terminal domain catalyzes the transfer of acetyl group from acetyl coenzyme A to glucosamine-1-phosphate (GlcN-1-P) to produce N-acetylglucosamine-1-phosphate (GlcNAc-1-P), which is converted into UDP-GlcNAc by the transfer of uridine 5-monophosphate (from uridine 5-triphosphate), a reaction catalyzed by the N-terminal domain. The chain is Bifunctional protein GlmU from Mycobacterium bovis (strain ATCC BAA-935 / AF2122/97).